We begin with the raw amino-acid sequence, 61 residues long: MKILLAALTSSFMLVGCTPRIEVAAPKEPITINMNVKIEHEIIIKADKDVEELLETRSDLF.

The N-terminal stretch at 1–16 is a signal peptide; sequence MKILLAALTSSFMLVG. A lipid anchor (N-palmitoyl cysteine) is attached at Cys17. Residue Cys17 is the site of S-diacylglycerol cysteine attachment.

The protein belongs to the lipoprotein YnbE family. In terms of assembly, interacts with the C-terminal region of the probable phospholipid transport protein YdbH.

The protein resides in the cell outer membrane. Its function is as follows. Involved in outer membrane lipid homeostasis. Interacts with the inner membrane protein YdbH to form a functional protein bridge connecting the inner and outer membranes of the cell. Is required for YdbH's function and may facilitate phospholipid transport through the periplasm. This is Outer membrane lipoprotein YnbE (ynbE) from Escherichia coli O6:H1 (strain CFT073 / ATCC 700928 / UPEC).